The sequence spans 451 residues: Phosphoglucosamine mutase (451 aa).

S102 acts as the Phosphoserine intermediate in catalysis. 4 residues coordinate Mg(2+): S102, D244, D246, and D248. S102 bears the Phosphoserine mark.

This sequence belongs to the phosphohexose mutase family. Mg(2+) is required as a cofactor. In terms of processing, activated by phosphorylation.

The catalysed reaction is alpha-D-glucosamine 1-phosphate = D-glucosamine 6-phosphate. Its function is as follows. Catalyzes the conversion of glucosamine-6-phosphate to glucosamine-1-phosphate. In Lawsonia intracellularis (strain PHE/MN1-00), this protein is Phosphoglucosamine mutase.